The sequence spans 491 residues: Glutamyl-tRNA(Gln) amidotransferase subunit A (491 aa).

Residues Lys77 and Ser152 each act as charge relay system in the active site. Ser176 serves as the catalytic Acyl-ester intermediate.

The protein belongs to the amidase family. GatA subfamily. In terms of assembly, heterotrimer of A, B and C subunits.

The catalysed reaction is L-glutamyl-tRNA(Gln) + L-glutamine + ATP + H2O = L-glutaminyl-tRNA(Gln) + L-glutamate + ADP + phosphate + H(+). In terms of biological role, allows the formation of correctly charged Gln-tRNA(Gln) through the transamidation of misacylated Glu-tRNA(Gln) in organisms which lack glutaminyl-tRNA synthetase. The reaction takes place in the presence of glutamine and ATP through an activated gamma-phospho-Glu-tRNA(Gln). The protein is Glutamyl-tRNA(Gln) amidotransferase subunit A of Chlamydia trachomatis serovar A (strain ATCC VR-571B / DSM 19440 / HAR-13).